The primary structure comprises 458 residues: ATP synthase subunit beta (458 aa).

Position 148-155 (glycine 148–threonine 155) interacts with ATP.

The protein belongs to the ATPase alpha/beta chains family. F-type ATPases have 2 components, CF(1) - the catalytic core - and CF(0) - the membrane proton channel. CF(1) has five subunits: alpha(3), beta(3), gamma(1), delta(1), epsilon(1). CF(0) has three main subunits: a(1), b(2) and c(9-12). The alpha and beta chains form an alternating ring which encloses part of the gamma chain. CF(1) is attached to CF(0) by a central stalk formed by the gamma and epsilon chains, while a peripheral stalk is formed by the delta and b chains.

Its subcellular location is the cell inner membrane. It catalyses the reaction ATP + H2O + 4 H(+)(in) = ADP + phosphate + 5 H(+)(out). Its function is as follows. Produces ATP from ADP in the presence of a proton gradient across the membrane. The catalytic sites are hosted primarily by the beta subunits. In Pseudomonas putida (strain W619), this protein is ATP synthase subunit beta.